The chain runs to 266 residues: Gasdermin bGSDM (266 aa).

The next 4 membrane-spanning stretches (beta stranded) occupy residues 67 to 83, 95 to 113, 162 to 179, and 187 to 203; these read LQQN…GVDI, KLRG…ISYQ, SFSV…DLEA, and ADVN…LMEY.

Belongs to the bacterial gasdermin family. As to quaternary structure, monomer. Forms large, homooligomeric ring-shaped pores when inserted in membranes.

It is found in the cytoplasm. The protein localises to the cell inner membrane. The full-length protein before cleavage is inactive: intramolecular interactions between the N-terminal domain and the C-terminal region mediate autoinhibition. The pyroptosis-like-inducing activity is carried by the released N-terminal domain (Gasdermin bGSDM, N-terminus). Precursor of a pore-forming protein involved in defense against bacteriophages. Expression of bGSDM and the neighboring protease gene (Gilli_2517) is not toxic in E.coli. Cleavage of this precursor by its dedicated protease releases the active moiety (gasdermin bGSDM, N-terminus) which inserts into membranes, forming pores and triggering cell death. Its function is as follows. Pore-forming protein that causes membrane permeabilization via a pyroptosis-like activity. Makes ring-like pores when released. The polypeptide is Gasdermin bGSDM (Gillisia limnaea (strain DSM 15749 / LMG 21470 / R-8282)).